The primary structure comprises 766 residues: Isocitrate lyase 2 (766 aa).

Residue 106–108 (GGW) participates in substrate binding. D177 contributes to the Mg(2+) binding site. C215 (proton acceptor) is an active-site residue. Substrate contacts are provided by residues 216 to 217 (GH), R252, 487 to 491 (NLSPS), and T522.

This sequence belongs to the isocitrate lyase/PEP mutase superfamily. Isocitrate lyase family. Mg(2+) is required as a cofactor.

It carries out the reaction D-threo-isocitrate = glyoxylate + succinate. It participates in carbohydrate metabolism; glyoxylate cycle; (S)-malate from isocitrate: step 1/2. Involved in the persistence and virulence of Mycobacterium. Catalyzes the reversible formation of succinate and glyoxylate from isocitrate, a key step of the glyoxylate cycle, which operates as an anaplerotic route for replenishing the tricarboxylic acid cycle during growth on fatty acid substrates. The chain is Isocitrate lyase 2 (aceA) from Mycobacterium bovis (strain ATCC BAA-935 / AF2122/97).